The chain runs to 564 residues: MAEAKDLFKEFKVQSVSEFFRRNAAMLGYTGKIRSLTTIIHEAVTNSLDACEEAGILPTIRVEIEELGKEHYKVIVEDNGPGIPEEYIPHVFGKMLAGTKAHRNIQSRGQQGIGISGAVMFAQITTGKPTRVITSTGGEIVEAWVKIDVQKNEGKIVKKVKHPNPKGWRGTRIEMEVKDVKYVRSRQGVYWYLKLTAIANPHAYIELVEPDGKLVVFPRSSEEIPKPPVEMKPHPKGVMVDDVYTMAHRSKRSSVKRFLVSEFSRISEKKIEELIKYVAAIRLLKSEQNEEIKEKLREKLINGDVDSVLRSFGRKWKKEVEKVAKIMEKPPEKLTWQEAEEIVEAFKLMKFLAPPTHGLRPIGEENIKRGLTGILKPEFVTAVTRSPKVYAGGIPFQVEVGLAYGGQISGSEILRYANRVPLLFDAGSCVITSAVRSIDWKRYKIDSFDSAPLVVLVNVISVHVPYTSTGKQSIADIEEIYNEIRLALMDAARKLALYLGGKYRRMYQIKRRKTLEKYLPEIARSLHILTGEPEEKIREYFLKLIESKIEVEEVESVEVEEAEA.

Residues Asn46, Asp78, 99 to 100, 109 to 116, and Lys471 each bind ATP; these read TK and GQQGIGIS.

It belongs to the TOP6B family. As to quaternary structure, homodimer. Heterotetramer of two Top6A and two Top6B chains.

The enzyme catalyses ATP-dependent breakage, passage and rejoining of double-stranded DNA.. In terms of biological role, relaxes both positive and negative superturns and exhibits a strong decatenase activity. In Pyrococcus horikoshii (strain ATCC 700860 / DSM 12428 / JCM 9974 / NBRC 100139 / OT-3), this protein is Type 2 DNA topoisomerase 6 subunit B.